The sequence spans 475 residues: C3a anaphylatoxin chemotactic receptor (475 aa).

Over 1-23 the chain is Extracellular; sequence MESSSAETNSTGLHLEPQYQPET. A glycan (N-linked (GlcNAc...) asparagine) is linked at Asn9. A helical membrane pass occupies residues 24–46; it reads ILAMAILGLTFVLGLPGNGLVLW. The Cytoplasmic segment spans residues 47-57; sequence VAGLKMRRTVN. A helical transmembrane segment spans residues 58 to 80; that stretch reads TVWFLHLTVADFVCCLSLPFSMA. The Extracellular portion of the chain corresponds to 81-96; the sequence is HLALRGYWPYGEILCK. Cysteines 95 and 172 form a disulfide. The helical transmembrane segment at 97–118 threads the bilayer; it reads FIPTVIIFNMFASVFLLTAISL. Topologically, residues 119 to 139 are cytoplasmic; the sequence is DRCLMVLKPIWCQNHRNVRTA. Residues 140 to 160 traverse the membrane as a helical segment; sequence CIICGCIWLVAFVLCIPVFVY. Residues 161-331 are Extracellular-facing; the sequence is RETFTLENHT…RLLKVITFTR (171 aa). Asn168 carries N-linked (GlcNAc...) asparagine glycosylation. Sulfotyrosine occurs at positions 174 and 183. Asn273 and Asn292 each carry an N-linked (GlcNAc...) asparagine glycan. A helical transmembrane segment spans residues 332–351; sequence LVVGFLLPMIIMVACYTLII. The Cytoplasmic segment spans residues 352-368; sequence FRMRRVRVVKSWNKALH. A helical transmembrane segment spans residues 369–391; that stretch reads LAMVVVTIFLICWAPYHVFGVLI. The Extracellular portion of the chain corresponds to 392-408; it reads LFINPESRVGAALLSWD. A helical membrane pass occupies residues 409–429; that stretch reads HVSIALASANSCFNPFLYALL. At 430–475 the chain is on the cytoplasmic side; sequence GRDLRKRVRQSMKGILEAAFSEDISKSTSFIQAKAFSEKHSLSTNV. Ser450 carries the phosphoserine modification.

The protein belongs to the G-protein coupled receptor 1 family. In terms of assembly, interacts with VGF-derived peptide TLQP-21. Expressed in the heart, kidney, lung, liver, peritoneal macrophages and spleen.

It localises to the cell membrane. Functionally, receptor for the chemotactic and inflammatory peptide anaphylatoxin C3a. This receptor stimulates chemotaxis, granule enzyme release and superoxide anion production. In Cavia porcellus (Guinea pig), this protein is C3a anaphylatoxin chemotactic receptor (C3AR1).